A 670-amino-acid polypeptide reads, in one-letter code: MSGVKLGSFALSISYTCVFVNLRRKKPIMAMYRLGHQQQHVPNTDISIFRDKVPYTPTVDDAALNKLIMIIRETYGLPKYTIRLISGTTFWAVIKNIYDNDRVFGNTTSEMMNGLDLVYAIDDFCTKQLLEMFPEHVTDMQHLAGAMSKSLGRTGFYRHLTETFKRHMLWSVLTNFSPVAYYPAADIARADEACDLVTRATVDRLRKTEETVLADERFRGLLGPEMVARLLKVIPGIPPDTARSIGLVFDNIRPKLSTEAARTLGGMLIETLRRQYSGYLPVAPLVDLTETVMVYVHEVDTCLLMDKRGRVFRALGEPISRSQPLSSPVARTSESTMKFQALFDDYMRAASMNAKRTVVTAPQTVAAQESRNPFTRELDSGQLSRATFENLIQLTGQLNYHQRTAIAESSGLVANPTMVSPTNTALAHMLRTNGAAIQESMLDDLNSRINDLTDQSRRFTDLKRVIGLLQSRDFETLAVHVGELHPDDRELVLHALGPSTRSAAQIDPPEIHRLPENTKLLCSFTTSINLPEIEELLHLWTITWETVFCGRNLFTRRKHALQYTTTGRHDNEPSQSIQFMFVDSLNAPGVLMDRLYPSKVTKLTFTELMVLSEKVETVTLPEIFAAQIGLNPSEVRLKNRDACEPPREIVTGVNHELGVDGRFRVAMEDV.

This is an uncharacterized protein from Ictalurid herpesvirus 1 (strain Auburn) (IcHV-1).